The chain runs to 216 residues: ATP-dependent dethiobiotin synthetase BioD (216 aa).

An ATP-binding site is contributed by 12–17; sequence GVGKSY. Serine 16 contacts Mg(2+). Lysine 37 is an active-site residue. Threonine 41 is a binding site for substrate. Residues histidine 53 and glutamate 115 each contribute to the Mg(2+) site. Residue 115–118 participates in ATP binding; the sequence is EGAG.

The protein belongs to the dethiobiotin synthetase family. As to quaternary structure, homodimer. The cofactor is Mg(2+).

Its subcellular location is the cytoplasm. It carries out the reaction (7R,8S)-7,8-diammoniononanoate + CO2 + ATP = (4R,5S)-dethiobiotin + ADP + phosphate + 3 H(+). The protein operates within cofactor biosynthesis; biotin biosynthesis; biotin from 7,8-diaminononanoate: step 1/2. In terms of biological role, catalyzes a mechanistically unusual reaction, the ATP-dependent insertion of CO2 between the N7 and N8 nitrogen atoms of 7,8-diaminopelargonic acid (DAPA, also called 7,8-diammoniononanoate) to form a ureido ring. The sequence is that of ATP-dependent dethiobiotin synthetase BioD from Wolinella succinogenes (strain ATCC 29543 / DSM 1740 / CCUG 13145 / JCM 31913 / LMG 7466 / NCTC 11488 / FDC 602W) (Vibrio succinogenes).